Reading from the N-terminus, the 340-residue chain is MNTMKTTYIVLELIIAVLSIAGNVLVCWAVAINSTLKNATNYFLVSLAVADIAVGLLAIPFAITISIGFQVDFHSCLFFACFVLVLTQSSIFSLLAVAIDRYLAIKIPLRYNSLVTGKRARGLIAVLWLLSFVIGLTPLMGWNKAMSGCPNSTNETGADHGAGHHGCFISCLFENVVTMSYMVYFNFFGCVLLPLIIMLGIYIKIFMVACKQLHQIELMGNSRTTLQKEVHAAKSLAIIVGLFAFCWLPLHILNCITHFHEEFSKSKPEWVMYVAIILSHANSVINPIIYAYRIRDFRYTFHKIISKILCKTDDFPKCTTDNNQHLTVTNVNAPAASVTI.

Over 1–6 the chain is Extracellular; sequence MNTMKT. Residues 7–31 traverse the membrane as a helical segment; it reads TYIVLELIIAVLSIAGNVLVCWAVA. Topologically, residues 32–41 are cytoplasmic; sequence INSTLKNATN. The chain crosses the membrane as a helical span at residues 42 to 65; sequence YFLVSLAVADIAVGLLAIPFAITI. Residues 66-76 lie on the Extracellular side of the membrane; the sequence is SIGFQVDFHSC. Cysteines 76 and 171 form a disulfide. The chain crosses the membrane as a helical span at residues 77 to 99; sequence LFFACFVLVLTQSSIFSLLAVAI. Topologically, residues 100 to 119 are cytoplasmic; the sequence is DRYLAIKIPLRYNSLVTGKR. The chain crosses the membrane as a helical span at residues 120–142; that stretch reads ARGLIAVLWLLSFVIGLTPLMGW. The Extracellular portion of the chain corresponds to 143-178; that stretch reads NKAMSGCPNSTNETGADHGAGHHGCFISCLFENVVT. 2 N-linked (GlcNAc...) asparagine glycosylation sites follow: Asn151 and Asn154. Adenosine is bound at residue Glu174. Residues 179 to 203 form a helical membrane-spanning segment; sequence MSYMVYFNFFGCVLLPLIIMLGIYI. The Cytoplasmic portion of the chain corresponds to 204–235; sequence KIFMVACKQLHQIELMGNSRTTLQKEVHAAKS. The helical transmembrane segment at 236 to 259 threads the bilayer; that stretch reads LAIIVGLFAFCWLPLHILNCITHF. Asn254 contacts adenosine. The Extracellular segment spans residues 260–267; that stretch reads HEEFSKSK. A helical membrane pass occupies residues 268–291; that stretch reads PEWVMYVAIILSHANSVINPIIYA. Positions 279 and 280 each coordinate adenosine. Topologically, residues 292–340 are cytoplasmic; the sequence is YRIRDFRYTFHKIISKILCKTDDFPKCTTDNNQHLTVTNVNAPAASVTI. A lipid anchor (S-palmitoyl cysteine) is attached at Cys310.

This sequence belongs to the G-protein coupled receptor 1 family.

It is found in the cell membrane. Functionally, receptor for adenosine. The activity of this receptor is mediated by G proteins which activate adenylyl cyclase. The sequence is that of Adenosine receptor A2b (ADORA2B) from Gallus gallus (Chicken).